The primary structure comprises 193 residues: CASP-like protein 1F3 (193 aa).

The segment at 1–25 is disordered; that stretch reads MASPQNTSQKRFFQANSPGGMPTAS. Topologically, residues 1 to 35 are cytoplasmic; it reads MASPQNTSQKRFFQANSPGGMPTASQSQRSRILAQ. The chain crosses the membrane as a helical span at residues 36–56; that stretch reads ITLRFLAIAFTVTAIPVMITA. Topologically, residues 57–78 are extracellular; it reads KEPVSLLGLAITPSYKQSSAMK. The chain crosses the membrane as a helical span at residues 79–99; that stretch reads FLLGVNATVFAFTALSMLFVW. Topologically, residues 100-118 are cytoplasmic; that stretch reads PLRRSGSKPINYFFLHLHD. Residues 119-139 traverse the membrane as a helical segment; the sequence is MVMTLLLISGCAAATAVGYLS. Residues 140–161 lie on the Extracellular side of the membrane; that stretch reads QYGQPETYWSPICDIVKKFCHQ. A helical transmembrane segment spans residues 162–182; sequence MLISTVLSYLAFFCYLALNIL. The Cytoplasmic segment spans residues 183–193; sequence SVHKLMSRATE.

Belongs to the Casparian strip membrane proteins (CASP) family. As to quaternary structure, homodimer and heterodimers.

It is found in the cell membrane. The sequence is that of CASP-like protein 1F3 from Populus trichocarpa (Western balsam poplar).